The following is a 319-amino-acid chain: ATP-dependent 6-phosphofructokinase (319 aa).

G11 provides a ligand contact to ATP. ADP is bound at residue 21 to 25 (RAVVR). Residues 72–73 (RC) and 102–105 (GDGS) contribute to the ATP site. D103 is a Mg(2+) binding site. 125 to 127 (TID) lines the substrate pocket. The active-site Proton acceptor is D127. ADP is bound at residue R154. Substrate-binding positions include R162 and 169 to 171 (MGR). ADP is bound by residues 185 to 187 (GAE), R211, and 213 to 215 (KLH). Residues E222, R243, and 249 to 252 (HIQR) each bind substrate.

It belongs to the phosphofructokinase type A (PFKA) family. ATP-dependent PFK group I subfamily. Prokaryotic clade 'B1' sub-subfamily. In terms of assembly, homotetramer. The cofactor is Mg(2+).

It localises to the cytoplasm. The enzyme catalyses beta-D-fructose 6-phosphate + ATP = beta-D-fructose 1,6-bisphosphate + ADP + H(+). It functions in the pathway carbohydrate degradation; glycolysis; D-glyceraldehyde 3-phosphate and glycerone phosphate from D-glucose: step 3/4. Allosterically activated by ADP and other diphosphonucleosides, and allosterically inhibited by phosphoenolpyruvate. In terms of biological role, catalyzes the phosphorylation of D-fructose 6-phosphate to fructose 1,6-bisphosphate by ATP, the first committing step of glycolysis. The protein is ATP-dependent 6-phosphofructokinase of Alkaliphilus metalliredigens (strain QYMF).